The chain runs to 219 residues: Orotidine 5'-phosphate decarboxylase (219 aa).

Substrate contacts are provided by residues aspartate 10, lysine 32, 58–67, serine 113, 163–173, glycine 186, and arginine 187; these read DFKVADIPYT and PGIGAQGGDPY. The active-site Proton donor is the lysine 60.

Belongs to the OMP decarboxylase family. Type 1 subfamily. As to quaternary structure, homodimer.

It carries out the reaction orotidine 5'-phosphate + H(+) = UMP + CO2. It participates in pyrimidine metabolism; UMP biosynthesis via de novo pathway; UMP from orotate: step 2/2. Its function is as follows. Catalyzes the decarboxylation of orotidine 5'-monophosphate (OMP) to uridine 5'-monophosphate (UMP). The sequence is that of Orotidine 5'-phosphate decarboxylase from Thermoplasma volcanium (strain ATCC 51530 / DSM 4299 / JCM 9571 / NBRC 15438 / GSS1).